The primary structure comprises 287 residues: 4-hydroxybenzoate octaprenyltransferase (287 aa).

Transmembrane regions (helical) follow at residues 41 to 61 (VSLL…GCAI), 92 to 112 (VALA…LNAL), 133 to 153 (FFAI…PMAF), 160 to 180 (VPLL…AYDT), 197 to 217 (TSAL…YAVT), and 267 to 287 (NNWL…AQAF).

This sequence belongs to the UbiA prenyltransferase family. The cofactor is Mg(2+).

The protein resides in the cell inner membrane. The enzyme catalyses all-trans-octaprenyl diphosphate + 4-hydroxybenzoate = 4-hydroxy-3-(all-trans-octaprenyl)benzoate + diphosphate. It functions in the pathway cofactor biosynthesis; ubiquinone biosynthesis. Its function is as follows. Catalyzes the prenylation of para-hydroxybenzoate (PHB) with an all-trans polyprenyl group. Mediates the second step in the final reaction sequence of ubiquinone-8 (UQ-8) biosynthesis, which is the condensation of the polyisoprenoid side chain with PHB, generating the first membrane-bound Q intermediate 3-octaprenyl-4-hydroxybenzoate. This chain is 4-hydroxybenzoate octaprenyltransferase, found in Paraburkholderia phymatum (strain DSM 17167 / CIP 108236 / LMG 21445 / STM815) (Burkholderia phymatum).